Consider the following 354-residue polypeptide: Polyribonucleotide 5'-hydroxyl-kinase PYRAB01840 (354 aa).

36-43 (GDVDTGKT) contributes to the ATP binding site.

A divalent metal cation is required as a cofactor.

It carries out the reaction a 5'-end dephospho-2'-deoxyribonucleoside-DNA + ATP = a 5'-end 5'-phospho-2'-deoxyribonucleoside-DNA + ADP + H(+). The catalysed reaction is a 5'-end dephospho-ribonucleoside-RNA + ATP = a 5'-end 5'-phospho-ribonucleoside-RNA + ADP + H(+). Functionally, polynucleotide kinase that can phosphorylate the 5'-hydroxyl groups of both single-stranded RNA (ssRNA) and single-stranded DNA (ssDNA). Exhibits a strong preference for ssRNA. In Pyrococcus abyssi (strain GE5 / Orsay), this protein is Polyribonucleotide 5'-hydroxyl-kinase PYRAB01840.